A 334-amino-acid chain; its full sequence is N-acetyl-gamma-glutamyl-phosphate reductase (334 aa).

Cysteine 149 is an active-site residue.

It belongs to the NAGSA dehydrogenase family. Type 1 subfamily.

It is found in the cytoplasm. It carries out the reaction N-acetyl-L-glutamate 5-semialdehyde + phosphate + NADP(+) = N-acetyl-L-glutamyl 5-phosphate + NADPH + H(+). The protein operates within amino-acid biosynthesis; L-arginine biosynthesis; N(2)-acetyl-L-ornithine from L-glutamate: step 3/4. In terms of biological role, catalyzes the NADPH-dependent reduction of N-acetyl-5-glutamyl phosphate to yield N-acetyl-L-glutamate 5-semialdehyde. The polypeptide is N-acetyl-gamma-glutamyl-phosphate reductase (Sulfurimonas denitrificans (strain ATCC 33889 / DSM 1251) (Thiomicrospira denitrificans (strain ATCC 33889 / DSM 1251))).